Reading from the N-terminus, the 368-residue chain is Chorismate synthase (368 aa).

NADP(+) is bound by residues R48 and R54. FMN-binding positions include 125-127 (RSS), 238-239 (NA), G278, 293-297 (KPTSS), and R319.

This sequence belongs to the chorismate synthase family. As to quaternary structure, homotetramer. FMNH2 is required as a cofactor.

It carries out the reaction 5-O-(1-carboxyvinyl)-3-phosphoshikimate = chorismate + phosphate. Its pathway is metabolic intermediate biosynthesis; chorismate biosynthesis; chorismate from D-erythrose 4-phosphate and phosphoenolpyruvate: step 7/7. Functionally, catalyzes the anti-1,4-elimination of the C-3 phosphate and the C-6 proR hydrogen from 5-enolpyruvylshikimate-3-phosphate (EPSP) to yield chorismate, which is the branch point compound that serves as the starting substrate for the three terminal pathways of aromatic amino acid biosynthesis. This reaction introduces a second double bond into the aromatic ring system. The sequence is that of Chorismate synthase from Methylibium petroleiphilum (strain ATCC BAA-1232 / LMG 22953 / PM1).